The chain runs to 314 residues: tRNA-cytidine(32) 2-sulfurtransferase (314 aa).

Residues 58–63 (SGGKDS) carry the PP-loop motif motif. 3 residues coordinate [4Fe-4S] cluster: Cys133, Cys136, and Cys224.

This sequence belongs to the TtcA family. As to quaternary structure, homodimer. Mg(2+) is required as a cofactor. It depends on [4Fe-4S] cluster as a cofactor.

It localises to the cytoplasm. It carries out the reaction cytidine(32) in tRNA + S-sulfanyl-L-cysteinyl-[cysteine desulfurase] + AH2 + ATP = 2-thiocytidine(32) in tRNA + L-cysteinyl-[cysteine desulfurase] + A + AMP + diphosphate + H(+). Its pathway is tRNA modification. Its function is as follows. Catalyzes the ATP-dependent 2-thiolation of cytidine in position 32 of tRNA, to form 2-thiocytidine (s(2)C32). The sulfur atoms are provided by the cysteine/cysteine desulfurase (IscS) system. This Polaromonas naphthalenivorans (strain CJ2) protein is tRNA-cytidine(32) 2-sulfurtransferase.